A 182-amino-acid polypeptide reads, in one-letter code: Putative manganese efflux pump MntP 2 (182 aa).

6 consecutive transmembrane segments (helical) span residues 2–22 (IELT…SIAL), 37–57 (AGGF…YLGV), 63–83 (IGGI…LKMI), 104–123 (LLLL…LTLT), 127–149 (LPLW…GGVH), and 162–182 (AEYL…IEHS).

It belongs to the MntP (TC 9.B.29) family.

The protein localises to the cell inner membrane. Probably functions as a manganese efflux pump. The sequence is that of Putative manganese efflux pump MntP 2 from Wolinella succinogenes (strain ATCC 29543 / DSM 1740 / CCUG 13145 / JCM 31913 / LMG 7466 / NCTC 11488 / FDC 602W) (Vibrio succinogenes).